The following is a 393-amino-acid chain: METFLFTSESVNEGHPDKLCDQISDAVLDACLTQDPDSKVACETCTKTNMVMVFGEITTKADVDYEQIVRKTCREIGFISDDVGLDADHCKVLVNIEQQSPDIAQGVHGHFTKRPEEIGAGDQGHMFGYATDETPELMPLTHVLATKLGAKLTEVRKNGTCPWLRPDGKTQVTIEYRNEGGAMVPERVHTVLISTQHDETVTNDQIAADLKEHVIKPVIPEKYLDENTIFHLNPSGRFVIGGPHGDAGLTGRKIIIDTYGGWGAHGGGAFSGKDPTKVDRSGAYIVRQAAKSIVAAGLARRCLVQVSYAIGVRGALSIFVDSYGTGSIPDKEILEIIKEHFDFRPGMITINLDLKRGGNGRFQKTAAYGHFGRDDPDFTWETVKPLKWEKAQA.

Glu9 is a Mg(2+) binding site. An ATP-binding site is contributed by His15. Residue Glu43 coordinates K(+). L-methionine-binding residues include Glu56 and Gln99. ATP is bound by residues 167-169 (DGK), 235-238 (SGRF), Asp246, 252-253 (RK), Ala269, Lys273, and Lys277. Asp246 contacts L-methionine. Lys277 is a binding site for L-methionine.

The protein belongs to the AdoMet synthase family. In terms of assembly, homotetramer. Requires Mn(2+) as cofactor. The cofactor is Mg(2+). It depends on Co(2+) as a cofactor. K(+) serves as cofactor. Roots and shoots.

The protein resides in the cytoplasm. It carries out the reaction L-methionine + ATP + H2O = S-adenosyl-L-methionine + phosphate + diphosphate. It participates in amino-acid biosynthesis; S-adenosyl-L-methionine biosynthesis; S-adenosyl-L-methionine from L-methionine: step 1/1. Functionally, catalyzes the formation of S-adenosylmethionine from methionine and ATP. The reaction comprises two steps that are both catalyzed by the same enzyme: formation of S-adenosylmethionine (AdoMet) and triphosphate, and subsequent hydrolysis of the triphosphate. The chain is S-adenosylmethionine synthase 2 (SAMS2) from Pinus contorta (Shore pine).